Consider the following 518-residue polypeptide: Glutamate--cysteine ligase (518 aa).

It belongs to the glutamate--cysteine ligase type 1 family. Type 1 subfamily.

The enzyme catalyses L-cysteine + L-glutamate + ATP = gamma-L-glutamyl-L-cysteine + ADP + phosphate + H(+). The protein operates within sulfur metabolism; glutathione biosynthesis; glutathione from L-cysteine and L-glutamate: step 1/2. This is Glutamate--cysteine ligase from Salmonella gallinarum (strain 287/91 / NCTC 13346).